A 207-amino-acid polypeptide reads, in one-letter code: N-(5'-phosphoribosyl)anthranilate isomerase (207 aa).

The protein belongs to the TrpF family.

It carries out the reaction N-(5-phospho-beta-D-ribosyl)anthranilate = 1-(2-carboxyphenylamino)-1-deoxy-D-ribulose 5-phosphate. The protein operates within amino-acid biosynthesis; L-tryptophan biosynthesis; L-tryptophan from chorismate: step 3/5. In Stutzerimonas stutzeri (strain A1501) (Pseudomonas stutzeri), this protein is N-(5'-phosphoribosyl)anthranilate isomerase.